Consider the following 341-residue polypeptide: MALTSRFYNERYPEIEDVVMVNVLSIAEMGAYVHLLEYNNIEGMILLSELSRRRIRSINKLIRVGKTEPVVVIRVDKEKGYIDLSKRRVSPEDVEKCTERFAKAKAINSLLRHVADILGFEGNEKLEDLYQKTAWHFEKKYNNKTVAYDIFKQSVTDPTVFDECNLEPETKEVLLSNIKRKLVSPTVKIRADIECSCYGYEGIDAVKASLTKGLELSTEELPIRINLIAPPLYVMTTSTTKKTDGLKALEVAIEHIRAKTSEYDGEFKVIMAPKLVTAIDEADLARRLERAEAENAQVAGDDDEEDGADQEGMQFDPEKEFNHKGSGAGRANEEDEEEEED.

An S1 motif domain is found at 16–87; sequence EDVVMVNVLS…EKGYIDLSKR (72 aa). Phosphoserine is present on Ser-51. The disordered stretch occupies residues 293-341; it reads AENAQVAGDDDEEDGADQEGMQFDPEKEFNHKGSGAGRANEEDEEEEED. Residues 300-309 are compositionally biased toward acidic residues; sequence GDDDEEDGAD.

The protein belongs to the eIF-2-alpha family. Eukaryotic translation initiation factor 2 eIF2 is a heterotrimeric complex composed of an alpha, a beta and a gamma subunit. In terms of processing, phosphorylation of eIF-2-alpha impairs the recycling of eIF-2 between successive rounds of initiation and thus leads to inhibition of translation.

The protein localises to the cytoplasm. It is found in the cytosol. EIF-2 functions in the early steps of protein synthesis by forming a ternary complex with GTP and initiator tRNA. This pre-initiation complex mediates ribosomal recognition of a start codon during the scanning process of the leader region. This Drosophila melanogaster (Fruit fly) protein is Eukaryotic translation initiation factor 2 subunit 1.